Reading from the N-terminus, the 129-residue chain is Protein UL131A (129 aa).

Positions 1–18 (MRLCRVWLSVCLCAVVLG) are cleaved as a signal peptide.

As to quaternary structure, forms the envelope pentamer complex (PC) composed of gH, gL, UL128, UL130, and UL131A. The pentamer interacts with host NRP2. The interaction with gH is important for the formation of UL128, UL130, gH-gL complex.

Its subcellular location is the virion membrane. Functionally, plays a role in viral entry into host cells. Forms a pentameric complex at the surface of the viral envelope together with gH, gL, UL130 and UL131. This complex is required for entry in epithelial, endothelial and myeloid host cells. Mechanistically, engages host receptor(s) including neurophilin 2/NRP2 to mediate infection. Contributes to the formation of the complex between UL128, UL130 and gH-gL. The polypeptide is Protein UL131A (UL131A) (Human cytomegalovirus (strain Merlin) (HHV-5)).